A 463-amino-acid chain; its full sequence is Putative glycine--tRNA ligase, cytoplasmic (463 aa).

The interval 25-54 is disordered; sequence TLEDSHAAKPETNAAIELPNKSKPEKSAVE. The segment covering 44–54 has biased composition (basic and acidic residues); the sequence is NKSKPEKSAVE. The substrate site is built by Arg-153 and Glu-239. ATP-binding positions include 271-273 and 281-286; these read RNE and LRTREF. Residues 286-290 and Asn-376 contribute to the substrate site; that span reads FTLAE. 398 to 399 is an ATP binding site; sequence EC.

This sequence belongs to the class-II aminoacyl-tRNA synthetase family. As to quaternary structure, homodimer.

It is found in the cytoplasm. The catalysed reaction is tRNA(Gly) + glycine + ATP = glycyl-tRNA(Gly) + AMP + diphosphate. Its function is as follows. Catalyzes the attachment of glycine to tRNA(Gly). Is also able produce diadenosine tetraphosphate (Ap4A), a universal pleiotropic signaling molecule needed for cell regulation pathways, by direct condensation of 2 ATPs. The polypeptide is Putative glycine--tRNA ligase, cytoplasmic (Arabidopsis thaliana (Mouse-ear cress)).